We begin with the raw amino-acid sequence, 447 residues long: Adenylosuccinate synthetase (447 aa).

GTP contacts are provided by residues 35-41 (GDEGKGK) and 63-65 (GHT). Catalysis depends on D36, which acts as the Proton acceptor. Residues D36 and G63 each contribute to the Mg(2+) site. IMP-binding positions include 36–39 (DEGK), 61–64 (NAGH), T153, R167, N245, T260, and R324. H64 functions as the Proton donor in the catalytic mechanism. 320 to 326 (VTTKRKR) provides a ligand contact to substrate. GTP-binding positions include R326, 352-354 (KLD), and 435-437 (GVG).

Belongs to the adenylosuccinate synthetase family. Homodimer. Requires Mg(2+) as cofactor.

The protein localises to the cytoplasm. It carries out the reaction IMP + L-aspartate + GTP = N(6)-(1,2-dicarboxyethyl)-AMP + GDP + phosphate + 2 H(+). The protein operates within purine metabolism; AMP biosynthesis via de novo pathway; AMP from IMP: step 1/2. Its function is as follows. Plays an important role in the de novo pathway and in the salvage pathway of purine nucleotide biosynthesis. Catalyzes the first committed step in the biosynthesis of AMP from IMP. The polypeptide is Adenylosuccinate synthetase (Drosophila sechellia (Fruit fly)).